The chain runs to 29 residues: MDTVSIAWAALMVIFTFSISLVVWGRNGL.

A helical transmembrane segment spans residues 3–23 (TVSIAWAALMVIFTFSISLVV).

The protein belongs to the PetN family. The 4 large subunits of the cytochrome b6-f complex are cytochrome b6, subunit IV (17 kDa polypeptide, PetD), cytochrome f and the Rieske protein, while the 4 small subunits are PetG, PetL, PetM and PetN. The complex functions as a dimer.

Its subcellular location is the plastid. The protein localises to the chloroplast thylakoid membrane. In terms of biological role, component of the cytochrome b6-f complex, which mediates electron transfer between photosystem II (PSII) and photosystem I (PSI), cyclic electron flow around PSI, and state transitions. The chain is Cytochrome b6-f complex subunit 8 from Psilotum nudum (Whisk fern).